The following is an 888-amino-acid chain: MVSSKLSFVATAVAALAPLASAFDASSRSNLAIYWGQGPNQLRLSHFCQETSLDIINIGFINYFPDMSPGHWPGSNFGNQCDGSVYVTNDGVVTKLLSGCHQIMEDIPICQAAGKKVLLSIGGAYPPDQSILSEDSAVAFATFLWGAFGPVAEGWEGPRPFGDVVVDGFDFDIEHNGGFGYATMANTFRQYFNQVPERKFYLSAAPQCIIPDAQLSDAIFNAAFDFIWIQYYNTAACSAKSFIDTSLGTFNFDAWVTVLKASASKDAKLYVGLPASETAANQGYYLTPDEVESLVSTYMDRYPDTFGGIMLWEATASENNQIDGAPYADHMKDILLHCDPSPPVTSSSAIPSSTPVTTPSPSSSAVPSSTPAVSETPSPSSSAVPSSTPVASSTPVVPGTSASSSPVSSSSAVASSTPVVPGTSASSSPVSSSSAVASSTPVVPGTSTSPSTPVIPGTSASSSPVSSSSAVASSTPVVPGTSASSSPVSSSSAVASSTPVVPGTSASSSPVSSSSAVASSTPVVPGTSVPSSTPAIPGGSSSSSEAVASSTPLVTLTLTVSPTPAPSSSESSSTDLSSSTQTDVGTAPSQPAGPSTTATATTSSSSSSTDESSTTVGSGNGNGSGSTTTTAATDSITAAPTATSSATATGATSEPVTITTIIVTSYIDICPTGFTTVTTTYTTTYCPGTNTATATATVTNPPSGPGGAGSQTTAPTVPEGWTTTVTICTQCAAKPTTVTLTLPVTETGSTSTDAVPAPPAATGEGSNPTQPSGASPTGGNGSFSEEPVPPPAVTQVSTSTEIVTLVRPTSSRPLILGTGTVHPSSTLAVKPSAKPSGQNSGSSSHVPIPPSYTQEAVSPLSTGAASRVTGLGHGLVLTVLTLSAFFVL.

Positions 1–22 (MVSSKLSFVATAVAALAPLASA) are cleaved as a signal peptide. The GH18 domain occupies 29–338 (SNLAIYWGQG…DHMKDILLHC (310 aa)). The Proton donor role is filled by glutamate 174. Disordered regions lie at residues 338-631 (CDPS…TTTA), 743-799 (PVTE…VSTS), and 813-855 (PLIL…YTQE). Residues 344 to 617 (VTSSSAIPSS…STDESSTTVG (274 aa)) show a composition bias toward low complexity. Asparagine 622 carries N-linked (GlcNAc...) asparagine glycosylation. Residues 764–775 (EGSNPTQPSGAS) are compositionally biased toward polar residues. N-linked (GlcNAc...) asparagine glycosylation is present at asparagine 780. Polar residues predominate over residues 835–855 (PSGQNSGSSSHVPIPPSYTQE). Glycine 863 carries GPI-anchor amidated glycine lipidation. Residues 864–888 (AASRVTGLGHGLVLTVLTLSAFFVL) constitute a propeptide, removed in mature form.

Belongs to the glycosyl hydrolase 18 family. Chitinase class III subfamily.

It localises to the cell membrane. Its subcellular location is the secreted. It is found in the cell wall. It carries out the reaction Random endo-hydrolysis of N-acetyl-beta-D-glucosaminide (1-&gt;4)-beta-linkages in chitin and chitodextrins.. Its activity is regulated as follows. The cyclic peptide natural product argifin acts as a specific inhibitor. In terms of biological role, GPI-anchored chitinase involved in the degradation of chitin, a component of the cell walls of fungi and exoskeletal elements of some animals (including worms and arthropods). Required to reshape the cell wall at the sites where cell wall remodeling and/or cell wall maturation actively take place such as sites of conidia formation. In Aspergillus fumigatus (strain ATCC MYA-4609 / CBS 101355 / FGSC A1100 / Af293) (Neosartorya fumigata), this protein is Endochitinase A1 (chiA1).